Reading from the N-terminus, the 637-residue chain is Probable potassium transport system protein Kup 2 (637 aa).

Transmembrane regions (helical) follow at residues 18-38 (FLVL…TSPL), 61-81 (LISL…VLFL), 107-127 (MPVL…DAMI), 145-165 (PAFS…LFAV), 174-194 (AVFF…GGLI), 211-231 (ALWF…AVFL), 255-275 (WFIL…ALVL), 293-313 (ALFP…QAVI), 345-365 (IYVP…IFSF), 371-391 (LATA…LMAF), 402-422 (AFTA…FLAA), and 429-449 (DGGW…WTWT).

This sequence belongs to the HAK/KUP transporter (TC 2.A.72) family.

Its subcellular location is the cell inner membrane. The enzyme catalyses K(+)(in) + H(+)(in) = K(+)(out) + H(+)(out). In terms of biological role, transport of potassium into the cell. Likely operates as a K(+):H(+) symporter. The polypeptide is Probable potassium transport system protein Kup 2 (Agrobacterium fabrum (strain C58 / ATCC 33970) (Agrobacterium tumefaciens (strain C58))).